The following is a 261-amino-acid chain: 4-hydroxy-tetrahydrodipicolinate reductase (261 aa).

9–14 (GCLGRM) contributes to the NAD(+) binding site. Residue R36 participates in NADP(+) binding. NAD(+) is bound by residues 97-99 (GTT) and 118-121 (SANM). H151 functions as the Proton donor/acceptor in the catalytic mechanism. H152 is a binding site for (S)-2,3,4,5-tetrahydrodipicolinate. The active-site Proton donor is the K155. Residue 161 to 162 (GT) participates in (S)-2,3,4,5-tetrahydrodipicolinate binding.

The protein belongs to the DapB family.

It is found in the cytoplasm. It catalyses the reaction (S)-2,3,4,5-tetrahydrodipicolinate + NAD(+) + H2O = (2S,4S)-4-hydroxy-2,3,4,5-tetrahydrodipicolinate + NADH + H(+). The catalysed reaction is (S)-2,3,4,5-tetrahydrodipicolinate + NADP(+) + H2O = (2S,4S)-4-hydroxy-2,3,4,5-tetrahydrodipicolinate + NADPH + H(+). It functions in the pathway amino-acid biosynthesis; L-lysine biosynthesis via DAP pathway; (S)-tetrahydrodipicolinate from L-aspartate: step 4/4. Catalyzes the conversion of 4-hydroxy-tetrahydrodipicolinate (HTPA) to tetrahydrodipicolinate. This Wolbachia sp. subsp. Drosophila simulans (strain wRi) protein is 4-hydroxy-tetrahydrodipicolinate reductase.